The sequence spans 1314 residues: E3 ubiquitin-protein ligase RNF123 (1314 aa).

N-acetylalanine is present on alanine 2. Positions 74-254 constitute a B30.2/SPRY domain; it reads VDSEDEESQG…VAFNFGSRPL (181 aa). A disordered region spans residues 460 to 481; the sequence is HRSSREGKDSAEDRAEAAEERP. Residues 462 to 481 show a composition bias toward basic and acidic residues; that stretch reads SSREGKDSAEDRAEAAEERP. Serine 675 is modified (phosphoserine). The residue at position 683 (arginine 683) is an Asymmetric dimethylarginine. Positions 968 to 974 are interaction with NFKB1; the sequence is WILVRLW. The Zn(2+) site is built by cysteine 1254, cysteine 1257, cysteine 1269, histidine 1271, cysteine 1274, cysteine 1277, cysteine 1288, and cysteine 1291. The segment at 1254–1292 adopts an RING-type zinc-finger fold; sequence CPICYAHPISAVFQPCGHKSCKACIDQHLMNNKDCFFCK.

In terms of assembly, component of the KPC complex composed of RNF123/KPC1 and UBAC1/KPC2. Interacts with UBAC1 and CDKN1B via its N-terminal domain. Interacts with RIGI (via N-terminus) and IFIH1 (via N-terminus). Ubiquitinated, leading to its degradation. Deubiquitinated by USP19, thereby stimulating CDKN1B ubiquitin-dependent degradation.

It is found in the cytoplasm. The enzyme catalyses S-ubiquitinyl-[E2 ubiquitin-conjugating enzyme]-L-cysteine + [acceptor protein]-L-lysine = [E2 ubiquitin-conjugating enzyme]-L-cysteine + N(6)-ubiquitinyl-[acceptor protein]-L-lysine.. It participates in protein modification; protein ubiquitination. Its function is as follows. Catalytic subunit of the KPC complex that acts as E3 ubiquitin-protein ligase. Promotes the ubiquitination and proteasome-mediated degradation of CDKN1B which is the cyclin-dependent kinase inhibitor at the G0-G1 transition of the cell cycle. Also acts as a key regulator of the NF-kappa-B signaling by promoting maturation of the NFKB1 component of NF-kappa-B. Acts by catalyzing ubiquitination of the NFKB1 p105 precursor, leading to limited proteasomal degradation of NFKB1 p105 and generation of the active NFKB1 p50 subunit. Functions also as an inhibitor of innate antiviral signaling mediated by RIGI and IFIH1 independently of its E3 ligase activity. Interacts with the N-terminal CARD domains of RIGI and IFIH1 and competes with the downstream adapter MAVS. This Oryctolagus cuniculus (Rabbit) protein is E3 ubiquitin-protein ligase RNF123.